The following is a 264-amino-acid chain: Protein-lysine methyltransferase METTL21C (264 aa).

The segment covering 1 to 10 (MDVCLSSAQQ) has biased composition (polar residues). The disordered stretch occupies residues 1 to 46 (MDVCLSSAQQPGRRGEGLSSPGGWLEAEKKGAPQKDSTGGVLEESN). S-adenosyl-L-methionine-binding positions include Trp-92, 120 to 122 (GAG), Asp-141, Trp-172, and Ser-193.

Belongs to the methyltransferase superfamily. METTL21 family. As to quaternary structure, interacts with members of the heat shock protein 70 families; these proteins may possibly be methylation substrates for the enzyme.

The protein resides in the nucleus. The protein localises to the cytoplasm. It carries out the reaction L-lysyl-[protein] + S-adenosyl-L-methionine = N(6)-methyl-L-lysyl-[protein] + S-adenosyl-L-homocysteine + H(+). The enzyme catalyses N(6)-methyl-L-lysyl-[protein] + S-adenosyl-L-methionine = N(6),N(6)-dimethyl-L-lysyl-[protein] + S-adenosyl-L-homocysteine + H(+). It catalyses the reaction N(6),N(6)-dimethyl-L-lysyl-[protein] + S-adenosyl-L-methionine = N(6),N(6),N(6)-trimethyl-L-lysyl-[protein] + S-adenosyl-L-homocysteine + H(+). In terms of biological role, protein-lysine N-methyltransferase using S-adenosyl-L-methionine as methyl donor. Mono-di and trimethylates 'Lys-943' of AARS1. This chain is Protein-lysine methyltransferase METTL21C, found in Homo sapiens (Human).